The chain runs to 86 residues: Acyl-CoA-binding protein homolog 1 (86 aa).

The 86-residue stretch at 1 to 86 (MTLSFDDAAA…VEELIAKYGA (86 aa)) folds into the ACB domain. An acyl-CoA contacts are provided by residues lysine 13, 28 to 32 (YALFK), lysine 50, lysine 54, and tyrosine 73.

Belongs to the ACBP family.

Binds medium- and long-chain acyl-CoA esters with very high affinity and may function as an intracellular carrier of acyl-CoA esters. This is Acyl-CoA-binding protein homolog 1 (acbp-1) from Caenorhabditis elegans.